The following is a 247-amino-acid chain: MKALIFLAFLGAAVALPLDDDDDKIVGGYTCQKNSLPYQVSLNAGYHFCGGSLINSQWVVSAAHCYKSRIQVRLGEHNIDVVEGGEQFIDAAKIIRHPSYNANTFDNDIMLIKLNSPATLNSRVSTVSLPRSCGSSGTKCLVSGWGNTLSSGTNYPSLLQCLDAPVLSDSSCKSSYPGKITSNMFCLGFLEGGKDSCQGDSGGPVVCNGQLQGVVSWGYGCAQKGKPGVYTKVCNYVNWIQQTVAAN.

The N-terminal stretch at 1-15 (MKALIFLAFLGAAVA) is a signal peptide. Residues 16 to 24 (LPLDDDDDK) constitute a propeptide, activation peptide. One can recognise a Peptidase S1 domain in the interval 25 to 245 (IVGGYTCQKN…YVNWIQQTVA (221 aa)). Disulfide bonds link Cys-31–Cys-161, Cys-49–Cys-65, Cys-133–Cys-234, Cys-140–Cys-207, Cys-172–Cys-186, and Cys-197–Cys-221. The Charge relay system role is filled by His-64. Positions 76, 78, 81, and 86 each coordinate Ca(2+). Asp-108 acts as the Charge relay system in catalysis. Ser-201 serves as the catalytic Charge relay system.

Belongs to the peptidase S1 family. Ca(2+) serves as cofactor.

The protein resides in the secreted. It is found in the extracellular space. It carries out the reaction Preferential cleavage: Arg-|-Xaa, Lys-|-Xaa.. The protein is Cationic trypsin-3 (Try3) of Rattus norvegicus (Rat).